Consider the following 363-residue polypeptide: Molybdenum import ATP-binding protein ModC (363 aa).

In terms of domain architecture, ABC transporter spans 1 to 230 (MISARFSGRQ…PNLPLIHRPD (230 aa)). ATP is bound at residue 31 to 38 (GPSGCGKT). One can recognise a Mop domain in the interval 289 to 359 (DTTILNALPA…LKAMALSAPA (71 aa)).

It belongs to the ABC transporter superfamily. Molybdate importer (TC 3.A.1.8) family. The complex is composed of two ATP-binding proteins (ModC), two transmembrane proteins (ModB) and a solute-binding protein (ModA).

The protein resides in the cell inner membrane. The catalysed reaction is molybdate(out) + ATP + H2O = molybdate(in) + ADP + phosphate + H(+). Its function is as follows. Part of the ABC transporter complex ModABC involved in molybdenum import. Responsible for energy coupling to the transport system. This Rhodobacter capsulatus (Rhodopseudomonas capsulata) protein is Molybdenum import ATP-binding protein ModC.